The chain runs to 101 residues: Protein SSXA1 (101 aa).

The 65-residue stretch at 19-83 (ETCQAFEDIS…ERVTKSVLSD (65 aa)) folds into the KRAB-related domain. The interval 73-101 (KERVTKSVLSDSDEVSSHESQDKRKNPVV) is disordered. Residues 87–101 (VSSHESQDKRKNPVV) are compositionally biased toward basic and acidic residues.

This sequence belongs to the SSX family. Specifically expressed in testis (at protein level). Not detected in other tissues tested (at protein level).

The protein resides in the nucleus. In terms of biological role, could act as a modulator of transcription. The polypeptide is Protein SSXA1 (Mus musculus (Mouse)).